A 171-amino-acid chain; its full sequence is Interleukin-26 (171 aa).

An N-terminal signal peptide occupies residues 1–21 (MLVNFILRCGLLLVTLSLAIA).

Belongs to the IL-10 family. Homodimer. In terms of tissue distribution, expressed in HVS transformed T-cells but not other T-cell lines or primary stimulated T-cells. Expressed in colonic T-cells including Th17 inflammatory T-cells; the expression is significantly increased in serum of patients with Crohn's disease (at protein level).

It is found in the secreted. Functionally, may play a role in local mechanisms of mucosal immunity and seems to have a pro-inflammatory function. May play a role in inflammatory bowel disease. Activates STAT1 and STAT3, MAPK1/3 (ERK1/2), JUN and AKT. Induces expression of SOCS3, TNF-alpha and IL-8, secretion of IL-8 and IL-10 and surface expression of ICAM1. Decreases proliferation of intestinal epithelial cells. Is inhibited by heparin. This Homo sapiens (Human) protein is Interleukin-26 (IL26).